We begin with the raw amino-acid sequence, 259 residues long: HTH-type quorum sensing-dependent transcriptional regulator VjbR (259 aa).

Residues 76-179 (KNYFAIDPVF…AGIIHGTVCG (104 aa)) form a C12-HSL binding region. The HTH luxR-type domain occupies 183-248 (ANSVASLLTP…SAVATALSLG (66 aa)). Residues 207 to 226 (DGEIAEILSIARWTVVTYLQ) constitute a DNA-binding region (H-T-H motif).

Transcriptional regulator involved in the global control of Brucella gene expression. Mediates the effects of the quorum sensing autoinducer C12-HSL (N-dodecanoyl-homoserine lactone) on a large and diverse number of genes. The chain is HTH-type quorum sensing-dependent transcriptional regulator VjbR (vjbR) from Brucella suis biovar 1 (strain 1330).